The primary structure comprises 88 residues: Protein A19 homolog (88 aa).

The disordered stretch occupies residues 1–28 (MADSTAGAKKRKKRSTSATSTRKEPPTV).

The protein belongs to the chordopoxvirinae A19 family.

This chain is Protein A19 homolog, found in Fowlpox virus (strain NVSL) (FPV).